A 573-amino-acid polypeptide reads, in one-letter code: MENQERKPRRRRRRRPQEGSQGGPQDHVEIIPLGGMGEIGKNITVFRFRDEIFVLDGGLAFPEEGMPGVDLLIPRVDYLIEHRHKIKAWVLTHGHEDHIGGLPFLLPMIFGKESPVPIYGARLTLGLLRGKLEEFGLRPGAFNLKEISPDDRIQVGRYFTLDLFRMTHSIPDNSGVVIRTPIGTIVHTGDFKLDPTPIDGKVSHLAKVAQAGAEGVLLLIADATNAERPGYTPSEMEIAKELDRVIGRAPGRVFVTTFASHIHRIQSVIWAAEKYGRKVAMEGRSMLKFSRIALELGYLKVKDRLYTLEEVKDLPDHQVLILATGSQGQPMSVLHRLAFEGHAKMAIKPGDTVILSSSPIPGNEEAVNRVINRLYALGAYVLYPPTYKVHASGHASQEELKLILNLTTPRFFLPWHGEVRHQMNFKWLAESMSRPPEKTLIGENGAVYRLTRETFEKVGEVPHGVLYVDGLGVGDITEEILADRRHMAEEGLVVITALAGEDPVVEVVSRGFVKAGERLLGEVRRMALEALKNGVREKKPLERIRDDIYYPVKKFLKKATGRDPMILPVVIEG.

A disordered region spans residues 1–29; sequence MENQERKPRRRRRRRPQEGSQGGPQDHVE. Positions 93, 95, 97, 98, 168, and 190 each coordinate Zn(2+). Residues 259–261 and 390–394 each bind substrate; these read ASH and HASGH. His416 serves as a coordination point for Zn(2+).

Belongs to the metallo-beta-lactamase superfamily. RNA-metabolizing metallo-beta-lactamase-like family. Bacterial RNase J subfamily. In terms of assembly, homodimer. May be a subunit of the RNA degradosome. It depends on Zn(2+) as a cofactor.

It localises to the cytoplasm. Functionally, an RNase that has endonuclease and possibly 5'-3' exonuclease activity. Probably involved in maturation of rRNA and in some organisms also mRNA maturation and/or decay. This is Ribonuclease J from Thermus thermophilus (strain ATCC BAA-163 / DSM 7039 / HB27).